The primary structure comprises 379 residues: Putative thylakoid lumen peptidyl-prolyl cis-trans isomerase sll0408 (379 aa).

Positions 1-33 are cleaved as a signal peptide; sequence MQIIKTPLGIITRRGLQLSLLSLLLTMLSLTWA. The PPIase cyclophilin-type domain occupies 190–378; the sequence is GRATVEMTTN…SGADNLVNGN (189 aa).

Its subcellular location is the cellular thylakoid lumen. It carries out the reaction [protein]-peptidylproline (omega=180) = [protein]-peptidylproline (omega=0). Functionally, PPIases accelerate the folding of proteins. It catalyzes the cis-trans isomerization of proline imidic peptide bonds in oligopeptides. Required for the assembly and stabilization of PSII. This Synechocystis sp. (strain ATCC 27184 / PCC 6803 / Kazusa) protein is Putative thylakoid lumen peptidyl-prolyl cis-trans isomerase sll0408.